A 203-amino-acid chain; its full sequence is A-type ATP synthase subunit E (203 aa).

This sequence belongs to the V-ATPase E subunit family. As to quaternary structure, has multiple subunits with at least A(3), B(3), C, D, E, F, H, I and proteolipid K(x).

It is found in the cell membrane. Functionally, component of the A-type ATP synthase that produces ATP from ADP in the presence of a proton gradient across the membrane. This is A-type ATP synthase subunit E from Methanococcus aeolicus (strain ATCC BAA-1280 / DSM 17508 / OCM 812 / Nankai-3).